Reading from the N-terminus, the 261-residue chain is 1-(5-phosphoribosyl)-5-[(5-phosphoribosylamino)methylideneamino] imidazole-4-carboxamide isomerase (261 aa).

Catalysis depends on Asp-15, which acts as the Proton acceptor. Asp-136 acts as the Proton donor in catalysis.

The protein belongs to the HisA/HisF family.

It localises to the cytoplasm. It carries out the reaction 1-(5-phospho-beta-D-ribosyl)-5-[(5-phospho-beta-D-ribosylamino)methylideneamino]imidazole-4-carboxamide = 5-[(5-phospho-1-deoxy-D-ribulos-1-ylimino)methylamino]-1-(5-phospho-beta-D-ribosyl)imidazole-4-carboxamide. The protein operates within amino-acid biosynthesis; L-histidine biosynthesis; L-histidine from 5-phospho-alpha-D-ribose 1-diphosphate: step 4/9. This is 1-(5-phosphoribosyl)-5-[(5-phosphoribosylamino)methylideneamino] imidazole-4-carboxamide isomerase from Synechococcus sp. (strain JA-3-3Ab) (Cyanobacteria bacterium Yellowstone A-Prime).